The following is a 338-amino-acid chain: Glycerol-3-phosphate dehydrogenase [NAD(P)+] 1 (338 aa).

The NADPH site is built by S11, W12, H32, R33, and K109. Sn-glycerol 3-phosphate-binding residues include K109, G140, and S142. An NADPH-binding site is contributed by A144. Sn-glycerol 3-phosphate is bound by residues K195, D248, S258, R259, and N260. K195 functions as the Proton acceptor in the catalytic mechanism. R259 provides a ligand contact to NADPH. NADPH is bound by residues V283 and E285.

The protein belongs to the NAD-dependent glycerol-3-phosphate dehydrogenase family.

It is found in the cytoplasm. It carries out the reaction sn-glycerol 3-phosphate + NAD(+) = dihydroxyacetone phosphate + NADH + H(+). The enzyme catalyses sn-glycerol 3-phosphate + NADP(+) = dihydroxyacetone phosphate + NADPH + H(+). The protein operates within membrane lipid metabolism; glycerophospholipid metabolism. Its function is as follows. Catalyzes the reduction of the glycolytic intermediate dihydroxyacetone phosphate (DHAP) to sn-glycerol 3-phosphate (G3P), the key precursor for phospholipid synthesis. In Lactobacillus delbrueckii subsp. bulgaricus (strain ATCC 11842 / DSM 20081 / BCRC 10696 / JCM 1002 / NBRC 13953 / NCIMB 11778 / NCTC 12712 / WDCM 00102 / Lb 14), this protein is Glycerol-3-phosphate dehydrogenase [NAD(P)+] 1.